A 409-amino-acid chain; its full sequence is Glycosyltransferase GtfC (409 aa).

Belongs to the glycosyltransferase 28 family.

It catalyses the reaction dTDP-beta-L-vancosamine + devancoaminyl-vancomycin = epivancomycin + dTDP + H(+). The catalysed reaction is chloroorienticin B + dTDP-beta-L-vancosamine = chloroeremomycin + dTDP + H(+). It functions in the pathway antibiotic biosynthesis; vancomycin biosynthesis. Its function is as follows. Catalyzes the attachment of dTDP-L-4-epi-vancosamine to chloroorienticin B to form chloroeremomycin in the biosynthesis of glycopeptide antibiotic chloroeremomycin, a member of the vancomycin group of antibiotics. Also able to use dTDP-L-4-epi-vancosamine and devancoaminyl-vancomycin (DVV) to create epivancomycin. Acts downstream of GtfA. The protein is Glycosyltransferase GtfC (gtfC) of Amycolatopsis orientalis (Nocardia orientalis).